We begin with the raw amino-acid sequence, 214 residues long: Transcriptional regulatory protein MctR (214 aa).

A Response regulatory domain is found at 8 to 124; it reads RVLLIDNHPL…EIVSAIETVA (117 aa). 4-aspartylphosphate is present on aspartate 59. Residues 143–208 enclose the HTH luxR-type domain; it reads VEEGSDPLTP…GLIRYALDHG (66 aa). The H-T-H motif DNA-binding region spans 167–186; it reads NKEIAETLGITSATAETHRK.

The protein resides in the cytoplasm. Member of the two-component regulatory system MctS/MctR, which activates mctP expression. The protein is Transcriptional regulatory protein MctR of Rhizobium johnstonii (strain DSM 114642 / LMG 32736 / 3841) (Rhizobium leguminosarum bv. viciae).